Consider the following 142-residue polypeptide: Large ribosomal subunit protein uL22c (142 aa).

This sequence belongs to the universal ribosomal protein uL22 family. In terms of assembly, part of the 50S ribosomal subunit.

It is found in the plastid. The protein resides in the chloroplast. Its function is as follows. This protein binds specifically to 23S rRNA. Functionally, the globular domain of the protein is located near the polypeptide exit tunnel on the outside of the subunit, while an extended beta-hairpin is found that lines the wall of the exit tunnel in the center of the 70S ribosome. The sequence is that of Large ribosomal subunit protein uL22c (rpl22) from Pinus thunbergii (Japanese black pine).